Consider the following 314-residue polypeptide: tRNA dimethylallyltransferase (314 aa).

12–19 (GPTASGKT) contributes to the ATP binding site. 14-19 (TASGKT) is a binding site for substrate. Interaction with substrate tRNA stretches follow at residues 37-40 (DSAL) and 162-166 (QRIIR).

Belongs to the IPP transferase family. As to quaternary structure, monomer. Mg(2+) serves as cofactor.

It carries out the reaction adenosine(37) in tRNA + dimethylallyl diphosphate = N(6)-dimethylallyladenosine(37) in tRNA + diphosphate. Functionally, catalyzes the transfer of a dimethylallyl group onto the adenine at position 37 in tRNAs that read codons beginning with uridine, leading to the formation of N6-(dimethylallyl)adenosine (i(6)A). The sequence is that of tRNA dimethylallyltransferase from Acinetobacter baumannii (strain SDF).